A 250-amino-acid chain; its full sequence is Mitochondrial inner membrane protease ATP23 (250 aa).

Residue H150 participates in a divalent metal cation binding. E151 is an active-site residue. H154 contacts a divalent metal cation.

The protein belongs to the peptidase M76 family.

The protein resides in the mitochondrion inner membrane. In terms of biological role, has a dual role in the assembly of mitochondrial ATPase. Acts as a protease that removes N-terminal residues of mitochondrial ATPase CF(0) subunit 6 at the intermembrane space side. Also involved in the correct assembly of the membrane-embedded ATPase CF(0) particle, probably mediating association of subunit 6 with the subunit 9 ring. The chain is Mitochondrial inner membrane protease ATP23 (ATP23) from Yarrowia lipolytica (strain CLIB 122 / E 150) (Yeast).